The following is a 30-amino-acid chain: Scolopendra 20528.11 Da toxin (30 aa).

The protein belongs to the CRISP family. Venom allergen 5-like subfamily. Contains 3 disulfide bonds. As to expression, expressed by the venom gland.

It localises to the secreted. This Scolopendra angulata (Barbados giant red centipede) protein is Scolopendra 20528.11 Da toxin.